The following is a 146-amino-acid chain: Hemoglobin subunit beta (146 aa).

Residue V1 is modified to N-acetylvaline. One can recognise a Globin domain in the interval 2 to 146 (HLTPDEKNAV…VANALAHKYH (145 aa)). T12 carries the phosphothreonine modification. Position 44 is a phosphoserine (S44). K59 carries the post-translational modification N6-acetyllysine. H63 contacts heme b. Position 82 is an N6-acetyllysine (K82). H92 is a heme b binding site. At C93 the chain carries S-nitrosocysteine. K144 is subject to N6-acetyllysine.

The protein belongs to the globin family. In terms of assembly, heterotetramer of two alpha chains and two beta chains. As to expression, red blood cells.

In terms of biological role, involved in oxygen transport from the lung to the various peripheral tissues. The polypeptide is Hemoglobin subunit beta (HBB) (Piliocolobus badius (Western red colobus)).